The primary structure comprises 3080 residues: Adhesion G-protein coupled receptor G4 (3080 aa).

A signal peptide spans 1–27; that stretch reads MKEHIIYQKLYGLILMSSFIFLSDTLS. Over 28–2740 the chain is Extracellular; it reads LKGKKLDFFG…SRSTVDSVNE (2713 aa). The Pentraxin (PTX) domain occupies 29–228; that stretch reads KGKKLDFFGR…IPTVDRTLRC (200 aa). Disulfide bonds link Cys-58-Cys-123 and Cys-200-Cys-228. Position 202 (Asp-202) interacts with Mg(2+). Asn-233, Asn-487, Asn-836, and Asn-899 each carry an N-linked (GlcNAc...) asparagine glycan. Residues 946–959 show a composition bias toward polar residues; sequence SEGISAGSPTSGST. Positions 946–965 are disordered; the sequence is SEGISAGSPTSGSTHIFGEP. A glycan (N-linked (GlcNAc...) asparagine) is linked at Asn-1020. The disordered stretch occupies residues 1274–1348; the sequence is VTEMSPSKNS…ITPTLTSSNT (75 aa). 3 stretches are compositionally biased toward polar residues: residues 1277-1296, 1305-1315, and 1324-1348; these read MSPS…SLEM, TKISSHQTHSP, and SDGN…SSNT. Residue Asn-1519 is glycosylated (N-linked (GlcNAc...) asparagine). Polar residues predominate over residues 2109–2139; that stretch reads SRTTITANPRTVSHPSSFSRKTMSPSTTDHT. A disordered region spans residues 2109–2141; the sequence is SRTTITANPRTVSHPSSFSRKTMSPSTTDHTLS. N-linked (GlcNAc...) asparagine glycosylation is found at Asn-2361 and Asn-2640. Positions 2578–2734 constitute a GAIN-B domain; the sequence is MAFSIHSYEE…GVLMDLSRST (157 aa). Disulfide bonds link Cys-2685–Cys-2716 and Cys-2704–Cys-2718. The GPS stretch occupies residues 2685–2734; it reads CAFWDFENNNGLGGWNSSGCKVKETNVNYTICQCDHLTHFGVLMDLSRST. Positions 2723-2734 are stachel; the sequence is HFGVLMDLSRST. Residues 2741–2766 form a helical membrane-spanning segment; sequence QILALITYTGCGISSIFLGVAVVTYI. Residues 2767–2777 lie on the Cytoplasmic side of the membrane; sequence AFHKLRKDYPA. A helical transmembrane segment spans residues 2778 to 2800; it reads KILINLCTALLMLNLVFLINSWL. Topologically, residues 2801–2806 are extracellular; it reads SSFQKV. A helical transmembrane segment spans residues 2807 to 2835; the sequence is GVCITAAVALHYFLLVSFTWMGLEAVHMY. Residues Cys-2809 and Cys-2886 are joined by a disulfide bond. Over 2836–2849 the chain is Cytoplasmic; the sequence is LALVKVFNIYIPNY. A helical transmembrane segment spans residues 2850-2870; it reads ILKFCLVGWGIPAIMVAITVS. The Extracellular segment spans residues 2871–2892; the sequence is VKKDLYGTLSPTTPFCWIKDDS. A helical transmembrane segment spans residues 2893–2918; that stretch reads IFYISVVAYFCLIFLMNLSMFCTVLV. Residues 2919-2937 lie on the Cytoplasmic side of the membrane; it reads QLNSVKSQIQKTRRKMILH. The helical transmembrane segment at 2938–2961 threads the bilayer; the sequence is DLKGTMSLTFLLGLTWGFAFFAWG. Topologically, residues 2962–2965 are extracellular; the sequence is PMRN. A helical membrane pass occupies residues 2966–2989; it reads FFLYLFAIFNTLQGFFIFVFHCVM. At 2990-3080 the chain is on the cytoplasmic side; that stretch reads KESVREQWQI…FDKDPYCSSP (91 aa). Residues 3051–3065 show a composition bias toward polar residues; the sequence is FKSLGSAQGTPSEIS. The tract at residues 3051-3080 is disordered; that stretch reads FKSLGSAQGTPSEISFPNDDFDKDPYCSSP.

The protein belongs to the G-protein coupled receptor 2 family. Adhesion G-protein coupled receptor (ADGR) subfamily. In terms of assembly, homodimer; homodimerizes via its Pentraxin domain in a calcium-independent manner. Heterodimer of 2 chains generated by proteolytic processing; the large extracellular N-terminal fragment and the membrane-bound C-terminal fragment predominantly remain associated and non-covalently linked. In terms of processing, autoproteolytically processed at the GPS region of the GAIN-B domain; this cleavage modulates receptor activity. N-glycosylated. In terms of tissue distribution, detected in fetal retina. Highly expressed in normal enterochromaffin cells and in neuroendocrine carcinoma. Detected in normal liver; highly expressed in primary liver carcinoma.

The protein resides in the membrane. Its activity is regulated as follows. Forms a heterodimer of 2 chains generated by proteolytic processing that remain associated through non-covalent interactions mediated by the GAIN-B domain. In the inactivated receptor, the Stachel sequence (also named stalk) is embedded in the GAIN-B domain, where it adopts a beta-strand conformation. On activation, the Stachel moves into the 7 transmembrane region and adopts a twisted hook-shaped configuration that forms contacts within the receptor, leading to coupling of a G-alpha protein, which activates signaling. The cleaved GAIN-B and N-terminal domains can then dissociate from the rest of the receptor. In terms of biological role, orphan adhesion G-protein coupled receptor (aGPCR). Ligand binding causes a conformation change that triggers signaling via guanine nucleotide-binding proteins (G proteins) and modulates the activity of downstream effectors, such as adenylate cyclase. ADGRG4 is coupled to G(s) G proteins and mediates activation of adenylate cyclase activity. May be act as sensor of mechanical forces. In Homo sapiens (Human), this protein is Adhesion G-protein coupled receptor G4.